The following is a 541-amino-acid chain: GMP synthase [glutamine-hydrolyzing] (541 aa).

The 195-residue stretch at 15–209 folds into the Glutamine amidotransferase type-1 domain; it reads TILTLDFGSQ…AVNICGCKQN (195 aa). The active-site Nucleophile is C91. Catalysis depends on residues H183 and E185. One can recognise a GMPS ATP-PPase domain in the interval 210–416; that stretch reads WTMARFVDQE…LGIAHEMVMR (207 aa). 238–244 contacts ATP; the sequence is SGGVDST. 4 residues coordinate XMP: R311, D478, K533, and E539.

Homodimer. The cofactor is Mg(2+).

Its subcellular location is the cytoplasm. It localises to the cytosol. It carries out the reaction XMP + L-glutamine + ATP + H2O = GMP + L-glutamate + AMP + diphosphate + 2 H(+). It functions in the pathway purine metabolism; GMP biosynthesis; GMP from XMP (L-Gln route): step 1/1. Functionally, catalyzes the conversion of xanthine monophosphate (XMP) to GMP in the presence of glutamine and ATP through an adenyl-XMP intermediate. The sequence is that of GMP synthase [glutamine-hydrolyzing] (gua1) from Aspergillus oryzae (strain ATCC 42149 / RIB 40) (Yellow koji mold).